Here is a 95-residue protein sequence, read N- to C-terminus: Co-chaperonin GroES (95 aa).

It belongs to the GroES chaperonin family. As to quaternary structure, heptamer of 7 subunits arranged in a ring. Interacts with the chaperonin GroEL.

The protein localises to the cytoplasm. Its function is as follows. Together with the chaperonin GroEL, plays an essential role in assisting protein folding. The GroEL-GroES system forms a nano-cage that allows encapsulation of the non-native substrate proteins and provides a physical environment optimized to promote and accelerate protein folding. GroES binds to the apical surface of the GroEL ring, thereby capping the opening of the GroEL channel. The chain is Co-chaperonin GroES from Chlorobaculum tepidum (strain ATCC 49652 / DSM 12025 / NBRC 103806 / TLS) (Chlorobium tepidum).